A 206-amino-acid polypeptide reads, in one-letter code: Venom allergen 5 2 (206 aa).

4 disulfide bridges follow: C4–C16, C8–C104, C28–C96, and C172–C189. The SCP domain occupies 48–191; the sequence is DEHNRFRQKV…MKSHYLVCNY (144 aa).

This sequence belongs to the CRISP family. Venom allergen 5-like subfamily. As to expression, expressed by the venom gland.

Its subcellular location is the secreted. In Polybia paulista (Neotropical social wasp), this protein is Venom allergen 5 2.